A 327-amino-acid polypeptide reads, in one-letter code: Ribose-phosphate pyrophosphokinase (327 aa).

ATP is bound by residues 46–48 and 105–106; these read NGE and RQ. Residues His139 and Asp179 each coordinate Mg(2+). The active site involves Lys203. Residues Arg205, Asp231, and 235–239 contribute to the D-ribose 5-phosphate site; that span reads DTGGT.

This sequence belongs to the ribose-phosphate pyrophosphokinase family. Class I subfamily. In terms of assembly, homohexamer. Mg(2+) serves as cofactor.

The protein resides in the cytoplasm. The catalysed reaction is D-ribose 5-phosphate + ATP = 5-phospho-alpha-D-ribose 1-diphosphate + AMP + H(+). Its pathway is metabolic intermediate biosynthesis; 5-phospho-alpha-D-ribose 1-diphosphate biosynthesis; 5-phospho-alpha-D-ribose 1-diphosphate from D-ribose 5-phosphate (route I): step 1/1. Functionally, involved in the biosynthesis of the central metabolite phospho-alpha-D-ribosyl-1-pyrophosphate (PRPP) via the transfer of pyrophosphoryl group from ATP to 1-hydroxyl of ribose-5-phosphate (Rib-5-P). The polypeptide is Ribose-phosphate pyrophosphokinase (Mycobacterium leprae (strain TN)).